A 137-amino-acid polypeptide reads, in one-letter code: Maltose regulon regulatory protein MalI (137 aa).

The 55-residue stretch at 6–60 (VTITEVAKHAGVSVTTVSMVLGNKGRISPDTIEKVNASVEALGYIRNRAAANLRS) folds into the HTH lacI-type domain. Residues 8–27 (ITEVAKHAGVSVTTVSMVLG) constitute a DNA-binding region (H-T-H motif).

Functionally, repressor for the malX and malY genes. The sequence is that of Maltose regulon regulatory protein MalI (malI) from Vibrio furnissii.